The primary structure comprises 322 residues: CRISPR-associated endonuclease Cas1 (322 aa).

Residues E149, H214, and E229 each coordinate Mn(2+).

Belongs to the CRISPR-associated endonuclease Cas1 family. Homodimer, forms a heterotetramer with a Cas2 homodimer. Mg(2+) is required as a cofactor. Requires Mn(2+) as cofactor.

Functionally, CRISPR (clustered regularly interspaced short palindromic repeat), is an adaptive immune system that provides protection against mobile genetic elements (viruses, transposable elements and conjugative plasmids). CRISPR clusters contain spacers, sequences complementary to antecedent mobile elements, and target invading nucleic acids. CRISPR clusters are transcribed and processed into CRISPR RNA (crRNA). Acts as a dsDNA endonuclease. Involved in the integration of spacer DNA into the CRISPR cassette. The polypeptide is CRISPR-associated endonuclease Cas1 (Methanocaldococcus jannaschii (strain ATCC 43067 / DSM 2661 / JAL-1 / JCM 10045 / NBRC 100440) (Methanococcus jannaschii)).